Here is a 414-residue protein sequence, read N- to C-terminus: CinA-like protein (414 aa).

It belongs to the CinA family.

This Citrifermentans bemidjiense (strain ATCC BAA-1014 / DSM 16622 / JCM 12645 / Bem) (Geobacter bemidjiensis) protein is CinA-like protein.